A 559-amino-acid chain; its full sequence is Chromatin assembly factor 1 subunit B (559 aa).

WD repeat units lie at residues H11–A54, R64–Q103, G127–I166, E169–N208, F228–A279, E299–Y340, and I344–K385. The disordered stretch occupies residues E386–P559. Residue T394 is modified to Phosphothreonine. The residue at position 409 (S409) is a Phosphoserine. T419 bears the Phosphothreonine mark. S429 carries the post-translational modification Phosphoserine. The segment covering P430–T444 has biased composition (low complexity). T433 carries the phosphothreonine modification. S458 carries the phosphoserine modification. Polar residues predominate over residues L469–T495. K494 bears the N6-acetyllysine mark. A phosphothreonine mark is found at T495, T509, T521, and T531. Positions T509 to E526 are enriched in low complexity. A Phosphoserine modification is found at S538. Residues E541 to G552 are compositionally biased toward basic and acidic residues.

The protein belongs to the WD repeat HIR1 family. Subunit of the CAF-1 complex that contains RBBP4, CHAF1B and CHAF1A. CHAF1A binds directly to CHAF1B. Only minor amounts of RBBP4 are complexed with CHAF1A and CHAF1B in G1 phase. In G2 and S phase also monomeric CHAF1B is detected. Interacts with histones H3.1, H3.2 and H3.1t. In terms of processing, differentially phosphorylated during cell cycle. During mitosis the p60 subunit of inactive CAF-1 is hyperphosphorylated and displaced into the cytosol. Progressivly dephosphorylated from G1 to S and G2 phase. Phosphorylated p60 is recruited to chromatin undergoing DNA repair after UV irradiation in G1, S or G2 phases.

Its subcellular location is the nucleus. The protein localises to the cytoplasm. Acts as a component of the histone chaperone complex chromatin assembly factor 1 (CAF-1), which assembles histone octamers onto DNA during replication and repair. CAF-1 performs the first step of the nucleosome assembly process, bringing newly synthesized histones H3 and H4 to replicating DNA; histones H2A/H2B can bind to this chromatin precursor subsequent to DNA replication to complete the histone octamer. The protein is Chromatin assembly factor 1 subunit B of Homo sapiens (Human).